Here is a 289-residue protein sequence, read N- to C-terminus: Probable ABC transporter permease protein BruAb2_0483 (289 aa).

6 helical membrane-spanning segments follow: residues 9-29 (FLIL…VVHL), 70-90 (VWTV…AIIL), 99-119 (VARV…AIFW), 144-166 (IQWL…LVTV), 213-233 (IAIV…WVMT), and 258-278 (FGEA…FTVI). An ABC transmembrane type-1 domain is found at 65-279 (LWRTAVWTVA…AILLVFTVIY (215 aa)).

Belongs to the binding-protein-dependent transport system permease family. As to quaternary structure, the complex is composed of two ATP-binding proteins (BruAb2_0487), two transmembrane proteins (BruAb2_0483) and a solute-binding protein (BruAb2_0484).

The protein resides in the cell inner membrane. Probably part of an ABC transporter complex. Probably responsible for the translocation of the substrate across the membrane. The sequence is that of Probable ABC transporter permease protein BruAb2_0483 from Brucella abortus biovar 1 (strain 9-941).